Reading from the N-terminus, the 252-residue chain is Triosephosphate isomerase (252 aa).

A substrate-binding site is contributed by 9–11; that stretch reads NWK. Histidine 100 functions as the Electrophile in the catalytic mechanism. Glutamate 171 serves as the catalytic Proton acceptor. Residues glycine 177, serine 216, and 237-238 each bind substrate; that span reads GG.

Belongs to the triosephosphate isomerase family. In terms of assembly, homodimer.

The protein resides in the cytoplasm. It carries out the reaction D-glyceraldehyde 3-phosphate = dihydroxyacetone phosphate. Its pathway is carbohydrate biosynthesis; gluconeogenesis. It functions in the pathway carbohydrate degradation; glycolysis; D-glyceraldehyde 3-phosphate from glycerone phosphate: step 1/1. In terms of biological role, involved in the gluconeogenesis. Catalyzes stereospecifically the conversion of dihydroxyacetone phosphate (DHAP) to D-glyceraldehyde-3-phosphate (G3P). This chain is Triosephosphate isomerase, found in Polynucleobacter necessarius subsp. necessarius (strain STIR1).